A 446-amino-acid polypeptide reads, in one-letter code: MEFHVRPGGALRGRLRVPGDKSISHRAIMLGALAEGETRISGFLEGADALATLRTFRAMGVDIDGPHQGRVTVQGVGLHGLRAPDGPLDLGNSGTSMRLLCGLLAGQSFDTTLTGDASLSRRPMRRVIDPLTAMGAVIESGQGGTAPLTVRGGQPLHGIDYELPVASAQVKSALLLAGLYARGRTCVTEPAPTRDHTERMLAGFGYPVRQEGRRVCIEGGGRLRGGEIDVPADISSAAFFLVGASIAEGSDITLEHVGMNPTRTGVVDILRLMGADIQVQNEREVGGEPVADLRVRSAPLKGVAIPEALVPLAIDEFPVLFVAAACAEGETLLTGAEELRVKESDRIAVMAEGLTTLGVTAEPQPDGMRIVGQPDWGGGRVHSHGDHRIAMAFTMAATRAREPIEIEDCANVNTSFPGFVELAGDAGVALTRGDAEGRAQQRSDSP.

Lysine 21, serine 22, and arginine 26 together coordinate 3-phosphoshikimate. Lysine 21 lines the phosphoenolpyruvate pocket. Glycine 94 and arginine 122 together coordinate phosphoenolpyruvate. 4 residues coordinate 3-phosphoshikimate: serine 167, glutamine 169, aspartate 315, and lysine 342. Glutamine 169 contacts phosphoenolpyruvate. The active-site Proton acceptor is aspartate 315. Residues arginine 346 and arginine 388 each coordinate phosphoenolpyruvate.

This sequence belongs to the EPSP synthase family. As to quaternary structure, monomer.

The protein resides in the cytoplasm. The catalysed reaction is 3-phosphoshikimate + phosphoenolpyruvate = 5-O-(1-carboxyvinyl)-3-phosphoshikimate + phosphate. Its pathway is metabolic intermediate biosynthesis; chorismate biosynthesis; chorismate from D-erythrose 4-phosphate and phosphoenolpyruvate: step 6/7. Its function is as follows. Catalyzes the transfer of the enolpyruvyl moiety of phosphoenolpyruvate (PEP) to the 5-hydroxyl of shikimate-3-phosphate (S3P) to produce enolpyruvyl shikimate-3-phosphate and inorganic phosphate. The protein is 3-phosphoshikimate 1-carboxyvinyltransferase of Alkalilimnicola ehrlichii (strain ATCC BAA-1101 / DSM 17681 / MLHE-1).